Consider the following 213-residue polypeptide: MDPGAGAFSEEQFREACAELQRPALSGAAWELLVETQGISVYRLLDQQTGLYAYKVFGVLEDCLPDLLADVYMDLAYRKQWDQYVKELYEKECSGETVVYWQVKYPFPMSNRDYVYVRQRQELDFEGQKVHVILAQSTSEPQFPEKSGVIRVKHYKQRLAIQSDGKRGSKVFMYYFDNPGGQIPSWVINWAAKNGVPNFLKDMVKACQNYKKT.

Met1 is subject to N-acetylmethionine. In terms of domain architecture, START spans 1–212 (MDPGAGAFSE…MVKACQNYKK (212 aa)). Positions 72 and 78 each coordinate a 1,2-diacyl-sn-glycero-3-phosphocholine. At Ser139 the chain carries Phosphoserine. Gln157 is a binding site for a 1,2-diacyl-sn-glycero-3-phosphocholine. Positions 171-176 (VFMYYF) are part of the binding site for phosphatidylcholine.

Interacts with ACOT13/THEM2.

It is found in the cytoplasm. In terms of biological role, catalyzes the transfer of phosphatidylcholine between membranes. Binds phosphatidylcholine in a tight 1:1 stoichiometric complex. The sequence is that of Phosphatidylcholine transfer protein (PCTP) from Bos taurus (Bovine).